Consider the following 309-residue polypeptide: Small ribosomal subunit protein uS7m (309 aa).

The interval 39 to 86 is disordered; that stretch reads DSTTSSRLPPRVQIQQQQQQRTQPYSTETTPPPNSNNGDLAGIEGQPP. Over residues 51–61 the composition is skewed to low complexity; it reads QIQQQQQQRTQ.

This sequence belongs to the universal ribosomal protein uS7 family. Component of the mitochondrial small ribosomal subunit (mt-SSU). Mature N.crassa 74S mitochondrial ribosomes consist of a small (37S) and a large (54S) subunit. The 37S small subunit contains a 16S ribosomal RNA (16S mt-rRNA) and 32 different proteins. The 54S large subunit contains a 23S rRNA (23S mt-rRNA) and 42 different proteins.

Its subcellular location is the mitochondrion. In terms of biological role, component of the mitochondrial ribosome (mitoribosome), a dedicated translation machinery responsible for the synthesis of mitochondrial genome-encoded proteins, including at least some of the essential transmembrane subunits of the mitochondrial respiratory chain. The mitoribosomes are attached to the mitochondrial inner membrane and translation products are cotranslationally integrated into the membrane. The protein is Small ribosomal subunit protein uS7m (rsm7) of Neurospora crassa (strain ATCC 24698 / 74-OR23-1A / CBS 708.71 / DSM 1257 / FGSC 987).